The primary structure comprises 174 residues: DNA replication inhibitor plutonium (174 aa).

2 ANK repeats span residues 39 to 68 and 72 to 103; these read YGNT…NIFA and FGQN…DFNL. The residue at position 167 (T167) is a Phosphothreonine.

Functionally, inhibits DNA replication early in developments. May bind and block the action of a replication or initiation factor. The polypeptide is DNA replication inhibitor plutonium (plu) (Drosophila melanogaster (Fruit fly)).